A 133-amino-acid polypeptide reads, in one-letter code: ATP synthase epsilon chain, chloroplastic (133 aa).

Belongs to the ATPase epsilon chain family. In terms of assembly, F-type ATPases have 2 components, CF(1) - the catalytic core - and CF(0) - the membrane proton channel. CF(1) has five subunits: alpha(3), beta(3), gamma(1), delta(1), epsilon(1). CF(0) has three main subunits: a, b and c.

The protein resides in the plastid. It is found in the chloroplast thylakoid membrane. In terms of biological role, produces ATP from ADP in the presence of a proton gradient across the membrane. The polypeptide is ATP synthase epsilon chain, chloroplastic (Nephroselmis olivacea (Green alga)).